We begin with the raw amino-acid sequence, 244 residues long: Large ribosomal subunit protein uL30A (244 aa).

Residues 1-26 (MAAEKILTPESQLKKSKAQQKTAEQV) are disordered.

It belongs to the universal ribosomal protein uL30 family. In terms of assembly, component of the large ribosomal subunit (LSU). Mature yeast ribosomes consist of a small (40S) and a large (60S) subunit. The 40S small subunit contains 1 molecule of ribosomal RNA (18S rRNA) and 33 different proteins (encoded by 57 genes). The large 60S subunit contains 3 rRNA molecules (25S, 5.8S and 5S rRNA) and 46 different proteins (encoded by 81 genes).

It localises to the cytoplasm. Functionally, component of the ribosome, a large ribonucleoprotein complex responsible for the synthesis of proteins in the cell. The small ribosomal subunit (SSU) binds messenger RNAs (mRNAs) and translates the encoded message by selecting cognate aminoacyl-transfer RNA (tRNA) molecules. The large subunit (LSU) contains the ribosomal catalytic site termed the peptidyl transferase center (PTC), which catalyzes the formation of peptide bonds, thereby polymerizing the amino acids delivered by tRNAs into a polypeptide chain. The nascent polypeptides leave the ribosome through a tunnel in the LSU and interact with protein factors that function in enzymatic processing, targeting, and the membrane insertion of nascent chains at the exit of the ribosomal tunnel. The protein is Large ribosomal subunit protein uL30A of Saccharomyces cerevisiae (strain ATCC 204508 / S288c) (Baker's yeast).